The sequence spans 341 residues: MLTNASQVLLRNRDLVKDQSVLVLNYEGDHLPKELLNTARSVCGLALDYHHHLMMQPYAAANLTLHFGHQLPNDESFDTVIVYFPKAKALAPYLFNLAAKHLKPQGQLIVVGENKGGIKSLPKQLPSYFDKPFKADNARHCIVFLSELNAAAPTLKLTDWISRYQLDTPQGQVTICNLVGVFSEKKLDEGTKLLLENLPKMRGKVLDFGCGAGVIAAALLKAQPELTLECVDINAMALASCEFTLQANGFNAKIFASDGLAQAAGRYDGIISNPPFHDGLASTTNIATNFVKDSAANLTTGGLFHIVANRHLPYSDTIAEHFGSVDVTAENNKYKIYSNVK.

It belongs to the methyltransferase superfamily. RsmC family. In terms of assembly, monomer.

The protein localises to the cytoplasm. It catalyses the reaction guanosine(1207) in 16S rRNA + S-adenosyl-L-methionine = N(2)-methylguanosine(1207) in 16S rRNA + S-adenosyl-L-homocysteine + H(+). Specifically methylates the guanine in position 1207 of 16S rRNA in the 30S particle. The sequence is that of Ribosomal RNA small subunit methyltransferase C from Shewanella halifaxensis (strain HAW-EB4).